A 157-amino-acid chain; its full sequence is 2-C-methyl-D-erythritol 2,4-cyclodiphosphate synthase (157 aa).

2 residues coordinate a divalent metal cation: Asp-9 and His-11. 4-CDP-2-C-methyl-D-erythritol 2-phosphate is bound by residues 9 to 11 and 35 to 36; these read DVH and HS. His-43 contributes to the a divalent metal cation binding site. Residues 57 to 59, 62 to 66, 101 to 107, 133 to 136, Phe-140, and Arg-143 each bind 4-CDP-2-C-methyl-D-erythritol 2-phosphate; these read DIG, FPDTD, AEKPKMA, and TTTE.

The protein belongs to the IspF family. In terms of assembly, homotrimer. Requires a divalent metal cation as cofactor.

It catalyses the reaction 4-CDP-2-C-methyl-D-erythritol 2-phosphate = 2-C-methyl-D-erythritol 2,4-cyclic diphosphate + CMP. The protein operates within isoprenoid biosynthesis; isopentenyl diphosphate biosynthesis via DXP pathway; isopentenyl diphosphate from 1-deoxy-D-xylulose 5-phosphate: step 4/6. Functionally, involved in the biosynthesis of isopentenyl diphosphate (IPP) and dimethylallyl diphosphate (DMAPP), two major building blocks of isoprenoid compounds. Catalyzes the conversion of 4-diphosphocytidyl-2-C-methyl-D-erythritol 2-phosphate (CDP-ME2P) to 2-C-methyl-D-erythritol 2,4-cyclodiphosphate (ME-CPP) with a corresponding release of cytidine 5-monophosphate (CMP). The polypeptide is 2-C-methyl-D-erythritol 2,4-cyclodiphosphate synthase (Listeria monocytogenes serotype 4b (strain CLIP80459)).